The primary structure comprises 177 residues: Translation initiation factor IF-3 (177 aa).

It belongs to the IF-3 family. In terms of assembly, monomer.

Its subcellular location is the cytoplasm. Its function is as follows. IF-3 binds to the 30S ribosomal subunit and shifts the equilibrium between 70S ribosomes and their 50S and 30S subunits in favor of the free subunits, thus enhancing the availability of 30S subunits on which protein synthesis initiation begins. This is Translation initiation factor IF-3 from Nitratiruptor sp. (strain SB155-2).